Reading from the N-terminus, the 196-residue chain is Urease accessory protein UreE (196 aa).

Residues 150–196 (RGAYSGGHDHGHAHAHSHAEAHSHAHGESHSHSHSHSHDDHHHHDHD) are disordered. Residues 156–196 (GHDHGHAHAHSHAEAHSHAHGESHSHSHSHSHDDHHHHDHD) show a composition bias toward basic and acidic residues.

It belongs to the UreE family.

It is found in the cytoplasm. In terms of biological role, involved in urease metallocenter assembly. Binds nickel. Probably functions as a nickel donor during metallocenter assembly. The polypeptide is Urease accessory protein UreE (Mesorhizobium japonicum (strain LMG 29417 / CECT 9101 / MAFF 303099) (Mesorhizobium loti (strain MAFF 303099))).